The sequence spans 130 residues: Sulfurtransferase TusD (130 aa).

Cys80 (cysteine persulfide intermediate) is an active-site residue.

It belongs to the DsrE/TusD family. In terms of assembly, heterohexamer, formed by a dimer of trimers. The hexameric TusBCD complex contains 2 copies each of TusB, TusC and TusD. The TusBCD complex interacts with TusE.

Its subcellular location is the cytoplasm. Its function is as follows. Part of a sulfur-relay system required for 2-thiolation of 5-methylaminomethyl-2-thiouridine (mnm(5)s(2)U) at tRNA wobble positions. Accepts sulfur from TusA and transfers it in turn to TusE. The sequence is that of Sulfurtransferase TusD from Sodalis glossinidius (strain morsitans).